Consider the following 205-residue polypeptide: ATP phosphoribosyltransferase (205 aa).

The protein belongs to the ATP phosphoribosyltransferase family. Short subfamily. In terms of assembly, heteromultimer composed of HisG and HisZ subunits.

It localises to the cytoplasm. The enzyme catalyses 1-(5-phospho-beta-D-ribosyl)-ATP + diphosphate = 5-phospho-alpha-D-ribose 1-diphosphate + ATP. The protein operates within amino-acid biosynthesis; L-histidine biosynthesis; L-histidine from 5-phospho-alpha-D-ribose 1-diphosphate: step 1/9. Functionally, catalyzes the condensation of ATP and 5-phosphoribose 1-diphosphate to form N'-(5'-phosphoribosyl)-ATP (PR-ATP). Has a crucial role in the pathway because the rate of histidine biosynthesis seems to be controlled primarily by regulation of HisG enzymatic activity. The chain is ATP phosphoribosyltransferase from Leptospira borgpetersenii serovar Hardjo-bovis (strain JB197).